The primary structure comprises 316 residues: Ribonuclease Z (316 aa).

Zn(2+) is bound by residues His-61, His-63, Asp-65, His-66, His-152, Asp-220, and His-279. Asp-65 acts as the Proton acceptor in catalysis.

The protein belongs to the RNase Z family. As to quaternary structure, homodimer. Zn(2+) serves as cofactor.

It catalyses the reaction Endonucleolytic cleavage of RNA, removing extra 3' nucleotides from tRNA precursor, generating 3' termini of tRNAs. A 3'-hydroxy group is left at the tRNA terminus and a 5'-phosphoryl group is left at the trailer molecule.. Zinc phosphodiesterase, which displays some tRNA 3'-processing endonuclease activity. Probably involved in tRNA maturation, by removing a 3'-trailer from precursor tRNA. The polypeptide is Ribonuclease Z (Clostridium perfringens (strain ATCC 13124 / DSM 756 / JCM 1290 / NCIMB 6125 / NCTC 8237 / Type A)).